A 407-amino-acid polypeptide reads, in one-letter code: Imidazolonepropionase (407 aa).

Residues His74 and His76 each contribute to the Fe(3+) site. 2 residues coordinate Zn(2+): His74 and His76. Positions 83, 146, and 179 each coordinate 4-imidazolone-5-propanoate. Tyr146 is a binding site for N-formimidoyl-L-glutamate. Residue His244 participates in Fe(3+) binding. His244 serves as a coordination point for Zn(2+). Gln247 is a binding site for 4-imidazolone-5-propanoate. Residue Asp319 participates in Fe(3+) binding. Asp319 is a binding site for Zn(2+). Asn321 and Gly323 together coordinate N-formimidoyl-L-glutamate. Thr324 serves as a coordination point for 4-imidazolone-5-propanoate.

The protein belongs to the metallo-dependent hydrolases superfamily. HutI family. The cofactor is Zn(2+). Fe(3+) serves as cofactor.

The protein localises to the cytoplasm. It carries out the reaction 4-imidazolone-5-propanoate + H2O = N-formimidoyl-L-glutamate. Its pathway is amino-acid degradation; L-histidine degradation into L-glutamate; N-formimidoyl-L-glutamate from L-histidine: step 3/3. Functionally, catalyzes the hydrolytic cleavage of the carbon-nitrogen bond in imidazolone-5-propanoate to yield N-formimidoyl-L-glutamate. It is the third step in the universal histidine degradation pathway. The polypeptide is Imidazolonepropionase (Salmonella typhi).